The sequence spans 120 residues: Protein FAM241B (120 aa).

The disordered stretch occupies residues 12-59; it reads QDDDPRVRTTTQHRSSSSQQGFFNRGHGAPPGGPGPRQQQAGARLGAA. 2 stretches are compositionally biased toward low complexity: residues 19–39 and 47–59; these read RTTT…RGHG and PRQQ…LGAA. Serine 61 carries the phosphoserine modification. A helical transmembrane segment spans residues 91 to 111; that stretch reads ILLLFLLMMLGVRGLLLVGLV.

This sequence belongs to the FAM241 family.

The protein localises to the membrane. In terms of biological role, may play a role in lysosome homeostasis. This chain is Protein FAM241B, found in Mus musculus (Mouse).